The following is an 867-amino-acid chain: cGMP-dependent 3',5'-cGMP phosphodiesterase A (867 aa).

A compositionally biased stretch (low complexity) spans 121–146 (IINSSSSTTDTSKTSPIKKQTSSSSP). Disordered regions lie at residues 121 to 167 (IINS…SQQQ) and 180 to 241 (HHHH…STFP). Residues 147–160 (PLSPQQQQPPPPLV) show a composition bias toward pro residues. Positions 191 to 220 (NDNNNNTTTNNNNIEILEQQQQQQQQQQQQ) are enriched in low complexity. Over residues 221 to 232 (QDEDSTDVDEEF) the composition is skewed to acidic residues. A phosphodiesterase activity region spans residues 357 to 503 (STTGFVLWIN…GDTCYDPNRI (147 aa)). A divalent metal cation-binding residues include His-399, His-401, and Asp-403. A nucleoside 3',5'-cyclic phosphate contacts are provided by residues 607–721 (IFRS…WEMR) and 734–851 (VFSR…IFVD).

The protein belongs to the metallo-beta-lactamase superfamily. cNMP phosphodiesterase family. Requires Mn(2+) as cofactor. It depends on Mg(2+) as a cofactor. Zn(2+) serves as cofactor.

It localises to the cytoplasm. Its subcellular location is the cytosol. The enzyme catalyses 3',5'-cyclic GMP + H2O = GMP + H(+). In terms of biological role, phosphodiesterase specific for cGMP, which is activated by cGMP but not by cAMP. Involved in the degradation of intracellular cGMP, contributes to the control of cGMP signals. In Dictyostelium discoideum (Social amoeba), this protein is cGMP-dependent 3',5'-cGMP phosphodiesterase A (pdeD).